The following is a 935-amino-acid chain: Myocardin (935 aa).

The MEF2C-binding motif lies at 12 to 27; it reads IRRKFRSVLQLRLQQR. 3 RPEL repeats span residues 18 to 43, 62 to 87, and 106 to 131; these read SVLQ…PPLK, DSLR…QAST, and DDLN…PMDS. A disordered region spans residues 37 to 73; the sequence is GLIPPLKGPTEFHDPRKQLDSAKTEDSLRRKGRNRSD. Basic and acidic residues predominate over residues 46–73; sequence TEFHDPRKQLDSAKTEDSLRRKGRNRSD. Residues 153-201 are HDAC5-binding; that stretch reads FEDDSSRDGLSPDQARSEDPQGSTGSTPDIKSTEAPLDTIQDLTPGSES. The tract at residues 155-283 is disordered; sequence DDSSRDGLSP…SPPPMDSAYA (129 aa). Composition is skewed to polar residues over residues 172-182 and 206-216; these read PQGSTGSTPDI and AASQPGNQSDP. The span at 244-261 shows a compositional bias: basic residues; that stretch reads NRHKKPKDPKPKVKKLKY. The stretch at 287 to 322 forms a coiled coil; sequence QQQQLFLQLQILSQQQQQQQQQQQQQQQQQQQQQRF. Residues 337 to 378 are disordered; sequence EQMARNPNPSSTPLSNTPLSPVKNSISGQTGVSSLKPGPLPP. Over residues 342–357 the composition is skewed to low complexity; it reads NPNPSSTPLSNTPLSP. Over residues 358 to 369 the composition is skewed to polar residues; it reads VKNSISGQTGVS. Positions 380-414 constitute an SAP domain; that stretch reads LDDLKVSELRQQLRIRGLPVSGTKTALVDRLRPFQ. Phosphoserine; by GSK3-beta occurs at positions 454, 458, 462, and 466. The disordered stretch occupies residues 498–518; it reads ESLLSSLNGGSGPSEPDGLDS. Residues 519–563 adopt a coiled-coil conformation; the sequence is EKDKMLVEKQKVINQLTWKLRQEQRQVEELRMQLQKQKSSCSDQK. Positions 579–605 are disordered; that stretch reads SCPFAPQQASGKGQGHSSDSPPPACET. A compositionally biased stretch (polar residues) spans 585–597; the sequence is QQASGKGQGHSSD. 4 positions are modified to phosphoserine; by GSK3-beta: serine 624, serine 628, serine 632, and serine 636. The tract at residues 654 to 731 is disordered; sequence NNHYFLASSS…DAVKQQMTRS (78 aa). A compositionally biased stretch (polar residues) spans 660–691; that stretch reads ASSSGAQRENHGVSSPSSSQGCAQMTGLQSSD. The span at 695 to 709 shows a compositional bias: low complexity; the sequence is PTFSIPSPTFSKSSS. The required for interaction with and ubiquitination by STUB1 stretch occupies residues 714 to 935; that stretch reads ITQPPSYEDA…SPMDLHLQQW (222 aa). Serine 812, serine 859, and serine 866 each carry phosphoserine; by MAPK1 and MAPK3. At threonine 893 the chain carries Phosphothreonine; by MAPK1 and MAPK3.

In terms of assembly, homodimer. Interacts with MLLT7/FOXO4. Interacts with SRF, its association does not depend on specific DNA sequences for ternary complex formation. Interacts (via C-terminal) with EP300 (via CREB-binding domain). Interacts with HDAC4 and HDAC5. Interacts with MEF2C. Interacts (via C-terminus) with STUB1/CHIP. Interacts with PURB. Ubiquitinated; by STUB1/CHIP at the C-terminus, leading to its degradation by the proteasome. Phosphorylation by GSK3B is required for STUB1/CHIP-mediated ubiquitination. Post-translationally, phosphorylation negatively regulates transcriptional activity. Phosphorylated; by GSK3B. As to expression, expressed in smooth muscle cell-containing tissues. Expressed in the heart. Expressed in the aorta and bladder. Weakly expression in the lung, testis and kidney. Weakly expressed in the stomach. Weakly expressed in the intestine and colon. In terms of tissue distribution, expressed in the heart. Predominantly expressed in cardiac muscle. As to expression, predominantly expressed in smooth muscle cell-rich tissues.

Its subcellular location is the nucleus speckle. Its function is as follows. Smooth muscle cells (SM) and cardiac muscle cells-specific transcriptional factor which uses the canonical single or multiple CArG boxes DNA sequence. Acts as a cofactor of serum response factor (SRF) with the potential to modulate SRF-target genes. Plays a crucial role in cardiogenesis, urinary bladder development, and differentiation of the smooth muscle cell lineage (myogenesis). Positively regulates the transcription of genes involved in vascular smooth muscle contraction. Positively regulates the activation of smooth muscle cell gene promoter regions. In terms of biological role, positively regulates the activation of smooth muscle cell gene promoter regions. Activation of the MYH6 promoter is enhanced in the presence of MEF2C. The protein is Myocardin (Myocd) of Mus musculus (Mouse).